The sequence spans 271 residues: Eukaryotic translation initiation factor 3 subunit G (271 aa).

Disordered stretches follow at residues 1 to 29 and 143 to 185; these read MPAL…SEVI and KPTK…MRGR. One can recognise an RRM domain in the interval 189–267; that stretch reads SAIRISNLSE…LILSVEWSKP (79 aa).

This sequence belongs to the eIF-3 subunit G family. Component of the eukaryotic translation initiation factor 3 (eIF-3) complex.

The protein resides in the cytoplasm. Functionally, RNA-binding component of the eukaryotic translation initiation factor 3 (eIF-3) complex, which is involved in protein synthesis of a specialized repertoire of mRNAs and, together with other initiation factors, stimulates binding of mRNA and methionyl-tRNAi to the 40S ribosome. The eIF-3 complex specifically targets and initiates translation of a subset of mRNAs involved in cell proliferation. This subunit can bind 18S rRNA. This Anopheles gambiae (African malaria mosquito) protein is Eukaryotic translation initiation factor 3 subunit G.